An 835-amino-acid chain; its full sequence is Cell division control protein 48 (835 aa).

The segment at 1–21 is disordered; sequence MGEEHKPLLDASGVDPREEDK. Position 257 to 263 (257 to 263) interacts with ATP; it reads PGTGKTL. Glycyl lysine isopeptide (Lys-Gly) (interchain with G-Cter in ubiquitin) cross-links involve residues Lys-305, Lys-322, and Lys-346. 2 residues coordinate ATP: Asn-358 and His-394. A phosphoserine mark is found at Ser-472 and Ser-519. Residue Lys-522 forms a Glycyl lysine isopeptide (Lys-Gly) (interchain with G-Cter in ubiquitin) linkage. Residue 531–536 participates in ATP binding; the sequence is GTGKTL. Glycyl lysine isopeptide (Lys-Gly) (interchain with G-Cter in ubiquitin) cross-links involve residues Lys-539, Lys-594, and Lys-673. Basic and acidic residues predominate over residues 720-729; sequence EAEKEVKVEG. The interval 720–746 is disordered; that stretch reads EAEKEVKVEGEDVEMTDEGAKAEQEPE. Thr-735 carries the phosphothreonine modification. Residue Ser-770 is modified to Phosphoserine. Positions 792–835 are disordered; it reads SNFNFNDAPLGTTATDNANSNNSAPSGAGAAFGSNAEEDDDLYS. Residues 802–826 are compositionally biased toward low complexity; it reads GTTATDNANSNNSAPSGAGAAFGSN.

It belongs to the AAA ATPase family. In terms of assembly, component of the heterotrimeric CDC48-NPL4-UFD1 ATPase complex. The CDC48-NPL4-UFD1 ATPase complex interacts with the HRD1 ubiquitin ligase complex composed of the E3 ligase HRD1, its cofactors HRD3, USA1 and DER1, substrate recruiting factor YOS9 and CDC48-binding protein UBX2. Interaction between the complexes is mediated by interaction between CDC48-NPL4-UFD1 complex member CDC48 and HRD1 complex member UBX2. Forms a complex composed of CDC48, NPL4, UFD1, UFD2 and SHP1. Forms a complex composed of CDC48, NPL4, UFD1, DOA1, SHP1 and deubiquitinase OTU1; within the complex interacts with DOA1/UFD3 and OTU1 to prevent multiubiquitination of substrates. Interacts with UFD2, to add further ubiquitin moieties; the interaction with UFD2 is prevented by DOA1/UFD3. Forms a complex composed of CDC48, DOA1, deubiquitinase UBP3 and probably BRE5; within the complex interacts with DOA1 and UBP3. Interacts (via C-terminus) with DOA1 (via PUL domain); the interaction is direct. Interacts with NPL4. Interacts with SHP1/UBX1, UBX2, UBX3, UBX4, UBX5, UBX6 and UBX7. Interacts with VMS1; the interaction recruits CDC48 to the mitochondria in response to mitochondrial stress. Component of the ribosome quality control complex (RQC), composed of the E3 ubiquitin ligase RKR1/LTN1, RQC1 and RQC2, as well as CDC48 and its ubiquitin-binding cofactors. RQC forms a stable complex with 60S ribosomal subunits. Interacts with ASE1 and CDC5; the interaction is likely to result in their degradation. Component of the DSCc E3 ligase complexes composed of at least TUL1, DSC2, DSC3, UBX3, CDC48 as well as VLD1 for the vacuole-localized complex or GLD1 for the Golgi/endosome-localized complex.

Its subcellular location is the microsome. It localises to the endoplasmic reticulum. The protein resides in the cytoplasm. It carries out the reaction ATP + H2O = ADP + phosphate + H(+). With respect to regulation, the first ATP-binding region has low ATPase activity. The second ATP-binding region is responsible for ATPase activity. ATP binding to the first ATP-binding region induces intrinsic activity of the second ATP-binding region. While ATP binding to the first ATP-binding region appears to prevent ATP hydrolysis by the second ATP-binding region, ADP-binding to first region promotes the coordinate and cooperative ATPase cycle of the second ATP-binding region. ATP binding to the first ATP-binding region induces a conformational change, promoting the rotation of the first ATP-binding region relative to the second ATP-binding region in the hexamer. ATP-dependent chaperone which probably uses the energy provided by ATP hydrolysis to generate mechanical force to unfold substrate proteins, disassemble protein complexes, and disaggregate protein aggregates. By recruiting and promoting the degradation of ubiquitinated proteins, plays a role in the ubiquitin fusion degradation (UFD) pathway. Has a role in the endoplasmic reticulum-associated degradation (ERAD) pathway which mediates the cytoplasmic elimination of misfolded proteins exported from the ER. Required for the proteasome-dependent processing/activation of MGA2 and SPT23 transcription factors leading to the subsequent expression of OLE1. Has an additional role in the turnover of OLE1 where it targets ubiquitinated OLE1 and other proteins to the ERAD. Regulates ubiquitin-mediated mitochondria protein degradation. Involved in spindle disassembly probably by promoting the degradation of spindle assembly factors ASE1 and CDC5 at the end of mitosis. Component of the ribosome quality control complex (RQC), a ribosome-associated complex that mediates ubiquitination and extraction of incompletely synthesized nascent chains for proteasomal degradation. CDC48 may provide the mechanical force that dislodges the polyubiquitinated nascent peptides from the exit channel. Required for ribophagy, a process which relocalizes ribosomal particles into the vacuole for degradation in response to starvation. Component of the DSC E3 ubiquitin ligase complexes that tag proteins present in Golgi, endosome and vacuole membranes and function in protein homeostasis under non-stress conditions and support a role in protein quality control. Substrate initially binds through the attached polyubiquitin chain to UDF1/NPL4 and then moves through the pore of the ATPase rings and is thereby unfolded. Acts on a broad range of even well-folded proteins via ubiquitin-binding and unfolding to initiate substrate processing. Involved in degradation of mislocalized tail-anchored transmembrane proteins extracted from the mitochondrion outer membrane by MSP1 and ubiquitinated by DOA10. This chain is Cell division control protein 48, found in Saccharomyces cerevisiae (strain ATCC 204508 / S288c) (Baker's yeast).